The chain runs to 707 residues: Molybdenum cofactor sulfurase (707 aa).

Position 206 is an N6-(pyridoxal phosphate)lysine (Lys-206). Cys-365 is a catalytic residue. Positions 558–705 (QWLENALDMT…VEAGSAVRFF (148 aa)) constitute an MOSC domain.

The protein belongs to the class-V pyridoxal-phosphate-dependent aminotransferase family. MOCOS subfamily. Pyridoxal 5'-phosphate is required as a cofactor.

It catalyses the reaction Mo-molybdopterin + L-cysteine + AH2 = thio-Mo-molybdopterin + L-alanine + A + H2O. The protein operates within cofactor biosynthesis; molybdopterin biosynthesis. Its function is as follows. Sulfurates the molybdenum cofactor. Sulfation of molybdenum is essential for xanthine dehydrogenase (XDH) and aldehyde oxidase (ADO) enzymes in which molybdenum cofactor is liganded by 1 oxygen and 1 sulfur atom in active form. This Caenorhabditis briggsae protein is Molybdenum cofactor sulfurase (mocs-1).